The chain runs to 330 residues: Biotin synthase (330 aa).

One can recognise a Radical SAM core domain in the interval 53 to 276 (NNIRLNVLLS…VFPFKELRLS (224 aa)). Positions 68, 72, and 75 each coordinate [4Fe-4S] cluster. Residues Cys112, Cys144, Cys204, and Arg274 each coordinate [2Fe-2S] cluster.

Belongs to the radical SAM superfamily. Biotin synthase family. In terms of assembly, homodimer. The cofactor is [4Fe-4S] cluster. Requires [2Fe-2S] cluster as cofactor.

The enzyme catalyses (4R,5S)-dethiobiotin + (sulfur carrier)-SH + 2 reduced [2Fe-2S]-[ferredoxin] + 2 S-adenosyl-L-methionine = (sulfur carrier)-H + biotin + 2 5'-deoxyadenosine + 2 L-methionine + 2 oxidized [2Fe-2S]-[ferredoxin]. The protein operates within cofactor biosynthesis; biotin biosynthesis; biotin from 7,8-diaminononanoate: step 2/2. Functionally, catalyzes the conversion of dethiobiotin (DTB) to biotin by the insertion of a sulfur atom into dethiobiotin via a radical-based mechanism. The chain is Biotin synthase from Streptococcus agalactiae serotype V (strain ATCC BAA-611 / 2603 V/R).